Here is a 311-residue protein sequence, read N- to C-terminus: Protoheme IX farnesyltransferase (311 aa).

9 helical membrane passes run 33–53 (VVML…PSPA), 55–75 (LWLL…AAAV), 104–124 (NALL…SSFI), 127–147 (LTAW…TLFL), 155–175 (IVIG…AVTG), 181–201 (GLLL…ALAL), 228–248 (IVLY…TRMM), 252–272 (YLVG…KLLV), and 287–307 (IIYL…FPIP).

This sequence belongs to the UbiA prenyltransferase family. Protoheme IX farnesyltransferase subfamily.

The protein resides in the cell inner membrane. The catalysed reaction is heme b + (2E,6E)-farnesyl diphosphate + H2O = Fe(II)-heme o + diphosphate. It participates in porphyrin-containing compound metabolism; heme O biosynthesis; heme O from protoheme: step 1/1. Functionally, converts heme B (protoheme IX) to heme O by substitution of the vinyl group on carbon 2 of heme B porphyrin ring with a hydroxyethyl farnesyl side group. The sequence is that of Protoheme IX farnesyltransferase from Teredinibacter turnerae (strain ATCC 39867 / T7901).